The primary structure comprises 327 residues: MQHLDKLVAQVLESINTATDVATLETLKVEFFGKKGHFTQLMQGLRDIPAEQRPAVGQKINDAKQIAQNALNQKKEALENTELNEKLAKESIDVSLPGRKSALGGLHPVSITIDRVVKFFSELGFTVANGPEIESDYYNFDALNIPTHHPARADHDTFWFDAQRLLRTQTSGVQIRTMQTTQPPIRIVAPGRVYRNDYDQTHTPMFHQIELLYIDKKANFTELKGLIHDFLKAFFEEDLQVRFRPSFFPFTEPSAEVDVMRQNGKWLEVLGCGMVHPNVLRNVGIDPEEYSGFAVGMGVERLTMLRYNVTDLRAFFENDLRFLKQFR.

Residue Glu252 participates in Mg(2+) binding.

Belongs to the class-II aminoacyl-tRNA synthetase family. Phe-tRNA synthetase alpha subunit type 1 subfamily. As to quaternary structure, tetramer of two alpha and two beta subunits. Requires Mg(2+) as cofactor.

It localises to the cytoplasm. It carries out the reaction tRNA(Phe) + L-phenylalanine + ATP = L-phenylalanyl-tRNA(Phe) + AMP + diphosphate + H(+). The protein is Phenylalanine--tRNA ligase alpha subunit of Haemophilus ducreyi (strain 35000HP / ATCC 700724).